The chain runs to 191 residues: Probable protein adenylyltransferase HI_0977 (191 aa).

Residues 37 to 162 enclose the Fido domain; sequence GSTKGLQQIH…NDLEIRFLLQ (126 aa). ATP-binding positions include 67-68, 112-114, arginine 118, and glutamine 145; these read KG and GNG.

This sequence belongs to the fic family.

It carries out the reaction L-tyrosyl-[protein] + ATP = O-(5'-adenylyl)-L-tyrosyl-[protein] + diphosphate. The enzyme catalyses L-threonyl-[protein] + ATP = 3-O-(5'-adenylyl)-L-threonyl-[protein] + diphosphate. In terms of biological role, probable adenylyltransferase that mediates the addition of adenosine 5'-monophosphate (AMP) to specific residues of target proteins. The polypeptide is Probable protein adenylyltransferase HI_0977 (Haemophilus influenzae (strain ATCC 51907 / DSM 11121 / KW20 / Rd)).